Here is a 295-residue protein sequence, read N- to C-terminus: Glutamyl-Q tRNA(Asp) synthetase (295 aa).

L-glutamate contacts are provided by residues 9 to 13 and Glu-45; that span reads RFAPT. The 'HIGH' region motif lies at 12–22; it reads PTPSGFLHFGS. Residues Cys-101, Cys-103, Tyr-115, and Cys-119 each coordinate Zn(2+). L-glutamate-binding residues include Tyr-172 and Arg-190. The short motif at 228–232 is the 'KMSKS' region element; sequence KLGKS. Lys-231 contributes to the ATP binding site.

The protein belongs to the class-I aminoacyl-tRNA synthetase family. GluQ subfamily. Zn(2+) serves as cofactor.

Functionally, catalyzes the tRNA-independent activation of glutamate in presence of ATP and the subsequent transfer of glutamate onto a tRNA(Asp). Glutamate is transferred on the 2-amino-5-(4,5-dihydroxy-2-cyclopenten-1-yl) moiety of the queuosine in the wobble position of the QUC anticodon. This is Glutamyl-Q tRNA(Asp) synthetase from Pseudomonas putida (strain W619).